We begin with the raw amino-acid sequence, 380 residues long: MANIRKTHPLLKIINGAFIDLPTPSNISVWWNFGSLLGLCLVTQILTGLFLAMHYTADISTAFSSVAHICRDVNYGWLIRNIHANGASFFFICLYLHVARGMYYGSYLQKETWNIGVILLLLTMMTAFVGYVLPWGQMSFWGATVITNLLSAFPYIGDTLVQWIWGGFSVDNATLTRFFAFHFLLPFVIAGASMIHLLFLHQTGSNNPTGLNSDADKVTFHPYFSYKDLLGFILMLVGLTSVALFSPNLLGDPDNFTPANPLVTPPHIKPEWYFLFAYAILRSIPNKLGGVLALLFSILVLMLVPMLHTSKQRGNTFRPLSQILFWALVADMLVLTWIGGQPVEHPFVLIGQAASTVYFALFLIALPLTGLLENKALNWN.

4 helical membrane passes run 33–53, 77–98, 113–133, and 178–198; these read FGSL…FLAM, WLIR…YLHV, WNIG…GYVL, and FFAF…IHLL. Heme b is bound by residues His83 and His97. Heme b-binding residues include His182 and His196. His201 lines the a ubiquinone pocket. 4 helical membrane passes run 226–246, 288–308, 320–340, and 347–367; these read YKDL…ALFS, LGGV…PMLH, LSQI…WIGG, and FVLI…IALP.

This sequence belongs to the cytochrome b family. As to quaternary structure, the cytochrome bc1 complex contains 3 respiratory subunits (MT-CYB, CYC1 and UQCRFS1), 2 core proteins (UQCRC1 and UQCRC2) and probably 6 low-molecular weight proteins. It depends on heme b as a cofactor.

Its subcellular location is the mitochondrion inner membrane. Its function is as follows. Component of the ubiquinol-cytochrome c reductase complex (complex III or cytochrome b-c1 complex) that is part of the mitochondrial respiratory chain. The b-c1 complex mediates electron transfer from ubiquinol to cytochrome c. Contributes to the generation of a proton gradient across the mitochondrial membrane that is then used for ATP synthesis. The polypeptide is Cytochrome b (mt-cyb) (Acipenser persicus (Persian sturgeon)).